Consider the following 438-residue polypeptide: 3-phosphoshikimate 1-carboxyvinyltransferase (438 aa).

Residues lysine 21, serine 22, and arginine 26 each contribute to the 3-phosphoshikimate site. Lysine 21 is a phosphoenolpyruvate binding site. Residues glycine 95 and arginine 123 each coordinate phosphoenolpyruvate. The 3-phosphoshikimate site is built by serine 167, glutamine 169, aspartate 315, and lysine 342. Position 169 (glutamine 169) interacts with phosphoenolpyruvate. The active-site Proton acceptor is aspartate 315. Residues arginine 346 and arginine 387 each coordinate phosphoenolpyruvate.

This sequence belongs to the EPSP synthase family. In terms of assembly, monomer.

The protein resides in the cytoplasm. The catalysed reaction is 3-phosphoshikimate + phosphoenolpyruvate = 5-O-(1-carboxyvinyl)-3-phosphoshikimate + phosphate. The protein operates within metabolic intermediate biosynthesis; chorismate biosynthesis; chorismate from D-erythrose 4-phosphate and phosphoenolpyruvate: step 6/7. Its function is as follows. Catalyzes the transfer of the enolpyruvyl moiety of phosphoenolpyruvate (PEP) to the 5-hydroxyl of shikimate-3-phosphate (S3P) to produce enolpyruvyl shikimate-3-phosphate and inorganic phosphate. The chain is 3-phosphoshikimate 1-carboxyvinyltransferase from Coxiella burnetii (strain CbuG_Q212) (Coxiella burnetii (strain Q212)).